The following is a 489-amino-acid chain: Netrin-5 (489 aa).

Positions 1 to 16 are cleaved as a signal peptide; that stretch reads MPVTFALLLLLGQATA. Residue Asn62 is glycosylated (N-linked (GlcNAc...) asparagine). 15 cysteine pairs are disulfide-bonded: Cys157/Cys166, Cys159/Cys175, Cys177/Cys186, Cys189/Cys209, Cys212/Cys221, Cys214/Cys239, Cys242/Cys251, Cys254/Cys272, Cys275/Cys287, Cys277/Cys294, Cys296/Cys305, Cys308/Cys322, Cys345/Cys418, Cys349/Cys420, and Cys364/Cys475. Laminin EGF-like domains are found at residues 157 to 211, 212 to 274, and 275 to 324; these read CQCH…PCLP, CSCN…ACRA, and CQCH…PCQR. In terms of domain architecture, NTR spans 345-475; it reads CQNYCNMSDT…LQQEERAGGC (131 aa). The tract at residues 470–489 is disordered; sequence ERAGGCRGVRAPTPSPRPEH.

The protein resides in the secreted. Its function is as follows. Plays a role in neurogenesis. Prevents motor neuron cell body migration out of the neural tube. This chain is Netrin-5 (NTN5), found in Homo sapiens (Human).